Consider the following 518-residue polypeptide: ATP synthase subunit alpha (518 aa).

169-176 (GDRKTGKT) is a binding site for ATP.

It belongs to the ATPase alpha/beta chains family. F-type ATPases have 2 components, CF(1) - the catalytic core - and CF(0) - the membrane proton channel. CF(1) has five subunits: alpha(3), beta(3), gamma(1), delta(1), epsilon(1). CF(0) has three main subunits: a(1), b(2) and c(9-12). The alpha and beta chains form an alternating ring which encloses part of the gamma chain. CF(1) is attached to CF(0) by a central stalk formed by the gamma and epsilon chains, while a peripheral stalk is formed by the delta and b chains.

The protein localises to the cell membrane. The enzyme catalyses ATP + H2O + 4 H(+)(in) = ADP + phosphate + 5 H(+)(out). Its function is as follows. Produces ATP from ADP in the presence of a proton gradient across the membrane. The alpha chain is a regulatory subunit. This chain is ATP synthase subunit alpha, found in Enterococcus faecalis (strain ATCC 700802 / V583).